A 192-amino-acid polypeptide reads, in one-letter code: UPF0149 protein YgfB (192 aa).

This sequence belongs to the UPF0149 family.

The polypeptide is UPF0149 protein YgfB (Salmonella typhi).